The chain runs to 582 residues: Phosphoribosylaminoimidazole carboxylase (582 aa).

The region spanning 114-305 is the ATP-grasp domain; it reads KKYLAEKGVA…QFENHLRAIL (192 aa). An ATP-binding site is contributed by 143–200; it reads AGRLGLPLMLKAKTLAYDGRGNSPLKSTSSEDIQASLKFLGDRPLYAEGWAPFVKEVA.

In the C-terminal section; belongs to the AIR carboxylase family. Class I subfamily.

It catalyses the reaction 5-amino-1-(5-phospho-D-ribosyl)imidazole-4-carboxylate + H(+) = 5-amino-1-(5-phospho-beta-D-ribosyl)imidazole + CO2. It functions in the pathway purine metabolism; IMP biosynthesis via de novo pathway; 5-amino-1-(5-phospho-D-ribosyl)imidazole-4-carboxylate from 5-amino-1-(5-phospho-D-ribosyl)imidazole (carboxylase route): step 1/1. The protein is Phosphoribosylaminoimidazole carboxylase (ADE2) of Cryptococcus neoformans var. grubii serotype A (strain H99 / ATCC 208821 / CBS 10515 / FGSC 9487) (Filobasidiella neoformans var. grubii).